Consider the following 649-residue polypeptide: Echinoderm microtubule-associated protein-like 2 (649 aa).

The interval 10–649 is tandem atypical propeller in EMLs; that stretch reads KEVIFSVEDG…DTSVLQWRVV (640 aa). Coiled-coil stretches lie at residues 13-58 and 73-114; these read IFSV…LKLE and YLLP…LAIH. 12 WD repeats span residues 56 to 93, 97 to 144, 151 to 192, 195 to 234, 241 to 280, 285 to 323, 369 to 406, 410 to 447, 452 to 489, 495 to 535, 564 to 602, and 609 to 648; these read KLEW…LYSV, RQRH…IWDS, HVLG…VWDW, ETKV…FWTL, KRQG…VWGK, ITQA…LWGS, FSLL…LWSS, QPLW…LLDT, LVAI…VYTV, KVSR…YWDP, FGIW…LFSY, and ALSH…QWRV.

It belongs to the WD repeat EMAP family. Homotrimer; self-association is mediated by the N-terminal coiled coil. As to quaternary structure, interacts with GRID2 and may also interact with GRID1. Interacts with EML3. Binds unpolymerized tubulins via its WD repeat region. In terms of tissue distribution, ubiquitous.

The protein resides in the cytoplasm. Its subcellular location is the cytoskeleton. It localises to the spindle. Its function is as follows. Tubulin binding protein that inhibits microtubule nucleation and growth, resulting in shorter microtubules. This is Echinoderm microtubule-associated protein-like 2 (EML2) from Homo sapiens (Human).